Consider the following 203-residue polypeptide: Outer-membrane lipoprotein carrier protein (203 aa).

An N-terminal signal peptide occupies residues 1–19 (MKKSIVVLFSAVLPFAVFA).

Belongs to the LolA family. In terms of assembly, monomer.

Its subcellular location is the periplasm. Participates in the translocation of lipoproteins from the inner membrane to the outer membrane. Only forms a complex with a lipoprotein if the residue after the N-terminal Cys is not an aspartate (The Asp acts as a targeting signal to indicate that the lipoprotein should stay in the inner membrane). This is Outer-membrane lipoprotein carrier protein from Shewanella amazonensis (strain ATCC BAA-1098 / SB2B).